An 882-amino-acid chain; its full sequence is DNA polymerase 1 (882 aa).

The disordered stretch occupies residues 1 to 31; the sequence is MTKQLTLFDIPSSKPAKSEQNTQQSQQSAPV. Residues 18-29 show a composition bias toward polar residues; sequence SEQNTQQSQQSA.

This sequence belongs to the DNA polymerase type-B family. In terms of assembly, interacts with PCNA subunit PCNA2 and weakly with PCNA3.

It catalyses the reaction DNA(n) + a 2'-deoxyribonucleoside 5'-triphosphate = DNA(n+1) + diphosphate. With respect to regulation, DNA synthesis is stimulated by PCNA heterotrimers. Functionally, this polymerase possesses two enzymatic activities: DNA synthesis (polymerase) and an exonucleolytic activity that degrades single-stranded DNA in the 3'- to 5'-direction. DNA polymerase I, DNA ligase and the flap endonuclease may be constitutively associated with the PCNA heterotrimer forming a scanning complex able to couple DNA synthesis and Okazaki fragment maturation. This Saccharolobus solfataricus (strain ATCC 35092 / DSM 1617 / JCM 11322 / P2) (Sulfolobus solfataricus) protein is DNA polymerase 1 (dpo1).